Reading from the N-terminus, the 415-residue chain is Succinate--CoA ligase [GDP-forming] subunit beta, mitochondrial (415 aa).

The N-terminal 19 residues, 1-19, are a transit peptide targeting the mitochondrion; that stretch reads MLRAAGNLSKSMMKSQRRF. The 231-residue stretch at 28–258 folds into the ATP-grasp domain; it reads KEILEKHGCS…SAAYRQKEIF (231 aa). GTP-binding positions include Gln-39, 72-74, and Val-130; that span reads GRG. Residues Asn-227 and Asp-241 each contribute to the Mg(2+) site. Residues Asn-292 and 349 to 351 each bind substrate; that span reads GIV.

Belongs to the succinate/malate CoA ligase beta subunit family. GTP-specific subunit beta subfamily. Heterodimer of an alpha and a beta subunit. The beta subunit determines specificity for GTP. It depends on Mg(2+) as a cofactor.

The protein localises to the mitochondrion. The catalysed reaction is GTP + succinate + CoA = succinyl-CoA + GDP + phosphate. The protein operates within carbohydrate metabolism; tricarboxylic acid cycle; succinate from succinyl-CoA (ligase route): step 1/1. Its function is as follows. GTP-specific succinyl-CoA synthetase functions in the citric acid cycle (TCA), coupling the hydrolysis of succinyl-CoA to the synthesis of GTP and thus represents the only step of substrate-level phosphorylation in the TCA. The beta subunit provides nucleotide specificity of the enzyme and binds the substrate succinate, while the binding sites for coenzyme A and phosphate are found in the alpha subunit. This chain is Succinate--CoA ligase [GDP-forming] subunit beta, mitochondrial, found in Caenorhabditis elegans.